The following is a 175-amino-acid chain: Ribosome maturation factor RimM (175 aa).

In terms of domain architecture, PRC barrel spans S95–F175.

The protein belongs to the RimM family. Binds ribosomal protein uS19.

It is found in the cytoplasm. Functionally, an accessory protein needed during the final step in the assembly of 30S ribosomal subunit, possibly for assembly of the head region. Essential for efficient processing of 16S rRNA. May be needed both before and after RbfA during the maturation of 16S rRNA. It has affinity for free ribosomal 30S subunits but not for 70S ribosomes. The protein is Ribosome maturation factor RimM of Aliivibrio fischeri (strain MJ11) (Vibrio fischeri).